The chain runs to 114 residues: Non-specific lipid-transfer protein 1 (114 aa).

The signal sequence occupies residues 1–23 (MEMVSKIACFVLLCMVVVAPHAE). Disulfide bonds link Cys-27/Cys-73, Cys-37/Cys-50, Cys-51/Cys-96, and Cys-71/Cys-110.

It belongs to the plant LTP family.

In terms of biological role, plant non-specific lipid-transfer proteins transfer phospholipids as well as galactolipids across membranes. May play a role in wax or cutin deposition in the cell walls of expanding epidermal cells and certain secretory tissues. In Solanum pennellii (Tomato), this protein is Non-specific lipid-transfer protein 1 (LTP1).